The chain runs to 100 residues: Apolipoprotein C-II (100 aa).

An N-terminal signal peptide occupies residues methionine 1–alanine 22. Positions serine 66–methionine 74 are lipid binding. Positions serine 78–glutamate 100 are lipoprotein lipase cofactor.

It belongs to the apolipoprotein C2 family. In terms of processing, proapolipoprotein C-II is synthesized as a sialic acid containing glycoprotein which is subsequently desialylated prior to its proteolytic processing. Proapolipoprotein C-II, the major form found in plasma undergoes proteolytic cleavage of its N-terminal hexapeptide to generate the mature form apolipoprotein C-II, which occurs as the minor form in plasma.

It localises to the secreted. In terms of biological role, component of chylomicrons, very low-density lipoproteins (VLDL), low-density lipoproteins (LDL), and high-density lipoproteins (HDL) in plasma. Plays an important role in lipoprotein metabolism as an activator of lipoprotein lipase. This is Apolipoprotein C-II (APOC2) from Microtus ochrogaster (Prairie vole).